The sequence spans 456 residues: Phospholipase A1 member A (456 aa).

An N-terminal signal peptide occupies residues 1-25; the sequence is MPPDFWERCFWLWGLLLWLSVGSTG. An N-linked (GlcNAc...) asparagine glycan is attached at asparagine 34. Residue serine 166 is the Nucleophile of the active site. Residue aspartate 190 is the Charge relay system of the active site. Residues cysteine 245 and cysteine 258 are joined by a disulfide bond. The Charge relay system role is filled by histidine 260. Intrachain disulfides connect cysteine 282–cysteine 293 and cysteine 296–cysteine 304.

Belongs to the AB hydrolase superfamily. Lipase family.

The protein resides in the secreted. It catalyses the reaction a 1,2-diacyl-sn-glycero-3-phospho-L-serine + H2O = a 2-acyl-sn-glycero-3-phospho-L-serine + a fatty acid + H(+). The enzyme catalyses 1,2-di-(9Z)-octadecenoyl-sn-glycero-3-phospho-L-serine + H2O = 2-(9Z-octadecenoyl)-sn-glycero-3-phospho-L-serine + (9Z)-octadecenoate + H(+). The catalysed reaction is 1-hexadecanoyl-2-(5Z,8Z,11Z,14Z-eicosatetraenoyl)-sn-glycero-3-phospho-L-serine + H2O = 2-(5Z,8Z,11Z,14Z)-eicosatetraenoyl-sn-glycero-3-phospho-L-serine + hexadecanoate + H(+). It carries out the reaction a 1-acyl-sn-glycero-3-phospho-L-serine + H2O = sn-glycero-3-phospho-L-serine + a fatty acid + H(+). It catalyses the reaction 1-(9Z-octadecenoyl)-sn-glycero-3-phospho-L-serine + H2O = sn-glycero-3-phospho-L-serine + (9Z)-octadecenoate + H(+). Functionally, hydrolyzes the ester bond of the acyl group attached at the sn-1 position of phosphatidylserines (phospholipase A1 activity) and 1-acyl-2-lysophosphatidylserines (lysophospholipase activity) in the pathway of phosphatidylserines acyl chain remodeling. Cleaves phosphatidylserines exposed on the outer leaflet of the plasma membrane of apoptotic cells producing 2-acyl-1-lysophosphatidylserines, which in turn enhance mast cell activation and histamine production. Has no activity toward other glycerophospholipids including phosphatidylcholines, phosphatidylethanolamines, phosphatidic acids or phosphatidylinositols, or glycerolipids such as triolein. This Bos taurus (Bovine) protein is Phospholipase A1 member A (PLA1A).